A 101-amino-acid polypeptide reads, in one-letter code: Feather keratin Cos2-2 (101 aa).

Serine 2 carries the N-acetylserine modification.

It belongs to the avian keratin family. The avian keratins (F-ker, S-ker, C-ker and B-ker) are a complex mixture of very similar polypeptides.

The protein is Feather keratin Cos2-2 of Columba livia (Rock dove).